A 132-amino-acid polypeptide reads, in one-letter code: Small ribosomal subunit protein uS8 (132 aa).

This sequence belongs to the universal ribosomal protein uS8 family. In terms of assembly, part of the 30S ribosomal subunit. Contacts proteins S5 and S12.

Functionally, one of the primary rRNA binding proteins, it binds directly to 16S rRNA central domain where it helps coordinate assembly of the platform of the 30S subunit. This chain is Small ribosomal subunit protein uS8, found in Ehrlichia canis (strain Jake).